The following is a 359-amino-acid chain: 3-dehydroquinate synthase (359 aa).

Residues 71-76, 105-109, 129-130, Lys142, and Lys151 contribute to the NAD(+) site; these read DGEAYK, GVVGD, and TT. Zn(2+)-binding residues include Glu184, His247, and His264.

Belongs to the sugar phosphate cyclases superfamily. Dehydroquinate synthase family. The cofactor is Co(2+). Requires Zn(2+) as cofactor. It depends on NAD(+) as a cofactor.

It localises to the cytoplasm. The catalysed reaction is 7-phospho-2-dehydro-3-deoxy-D-arabino-heptonate = 3-dehydroquinate + phosphate. It functions in the pathway metabolic intermediate biosynthesis; chorismate biosynthesis; chorismate from D-erythrose 4-phosphate and phosphoenolpyruvate: step 2/7. In terms of biological role, catalyzes the conversion of 3-deoxy-D-arabino-heptulosonate 7-phosphate (DAHP) to dehydroquinate (DHQ). The sequence is that of 3-dehydroquinate synthase from Burkholderia cenocepacia (strain HI2424).